Consider the following 289-residue polypeptide: Elongation factor Ts (289 aa).

The involved in Mg(2+) ion dislocation from EF-Tu stretch occupies residues 82-85; that stretch reads TDFV.

The protein belongs to the EF-Ts family.

The protein resides in the cytoplasm. In terms of biological role, associates with the EF-Tu.GDP complex and induces the exchange of GDP to GTP. It remains bound to the aminoacyl-tRNA.EF-Tu.GTP complex up to the GTP hydrolysis stage on the ribosome. This Chloroherpeton thalassium (strain ATCC 35110 / GB-78) protein is Elongation factor Ts.